The following is a 201-amino-acid chain: Small ribosomal subunit protein uS4c (201 aa).

In terms of domain architecture, S4 RNA-binding spans 89 to 152 (MRLDNILFRL…NSRTLVQNLL (64 aa)).

This sequence belongs to the universal ribosomal protein uS4 family. As to quaternary structure, part of the 30S ribosomal subunit. Contacts protein S5. The interaction surface between S4 and S5 is involved in control of translational fidelity.

The protein localises to the plastid. It is found in the chloroplast. Functionally, one of the primary rRNA binding proteins, it binds directly to 16S rRNA where it nucleates assembly of the body of the 30S subunit. Its function is as follows. With S5 and S12 plays an important role in translational accuracy. In Olimarabidopsis pumila (Dwarf rocket), this protein is Small ribosomal subunit protein uS4c (rps4).